Here is a 412-residue protein sequence, read N- to C-terminus: Light-independent protochlorophyllide reductase subunit N (412 aa).

Positions 17, 42, and 103 each coordinate [4Fe-4S] cluster.

This sequence belongs to the BchN/ChlN family. In terms of assembly, protochlorophyllide reductase is composed of three subunits; ChlL, ChlN and ChlB. Forms a heterotetramer of two ChlB and two ChlN subunits. [4Fe-4S] cluster is required as a cofactor.

The enzyme catalyses chlorophyllide a + oxidized 2[4Fe-4S]-[ferredoxin] + 2 ADP + 2 phosphate = protochlorophyllide a + reduced 2[4Fe-4S]-[ferredoxin] + 2 ATP + 2 H2O. It participates in porphyrin-containing compound metabolism; chlorophyll biosynthesis (light-independent). In terms of biological role, component of the dark-operative protochlorophyllide reductase (DPOR) that uses Mg-ATP and reduced ferredoxin to reduce ring D of protochlorophyllide (Pchlide) to form chlorophyllide a (Chlide). This reaction is light-independent. The NB-protein (ChlN-ChlB) is the catalytic component of the complex. The polypeptide is Light-independent protochlorophyllide reductase subunit N (Synechococcus sp. (strain CC9902)).